The primary structure comprises 162 residues: Probable E3 ubiquitin-protein ligase XERICO (162 aa).

A helical transmembrane segment spans residues 12 to 28 (GMLCVILVNTALSISIV). Residues 103–145 (CSVCLSKFQGDSEINKLKCGHLFHKTCLEKWIDYWNITCPLCR) form an RING-type; atypical zinc finger.

Interacts with UBC8 and TULP9. As to expression, ubiquitous. Higher expression in actively growing tissues.

It localises to the membrane. The enzyme catalyses S-ubiquitinyl-[E2 ubiquitin-conjugating enzyme]-L-cysteine + [acceptor protein]-L-lysine = [E2 ubiquitin-conjugating enzyme]-L-cysteine + N(6)-ubiquitinyl-[acceptor protein]-L-lysine.. It participates in protein modification; protein ubiquitination. Function on abscisic acid homeostasis at post-translational level, probably through ubiquitin/proteasome-dependent substrate-specific degradation. In Arabidopsis thaliana (Mouse-ear cress), this protein is Probable E3 ubiquitin-protein ligase XERICO (XERICO).